The following is a 403-amino-acid chain: Dual-specificity RNA methyltransferase RlmN (403 aa).

The active-site Proton acceptor is the Glu126. A Radical SAM core domain is found at 132–375 (ETDRGTLCVS…VRTPRGRDIL (244 aa)). The cysteines at positions 139 and 378 are disulfide-linked. Residues Cys146, Cys150, and Cys153 each coordinate [4Fe-4S] cluster. Residues 204 to 205 (GE), Ser236, 258 to 260 (SLH), and Asn335 each bind S-adenosyl-L-methionine. Cys378 acts as the S-methylcysteine intermediate in catalysis.

The protein belongs to the radical SAM superfamily. RlmN family. Requires [4Fe-4S] cluster as cofactor.

The protein resides in the cytoplasm. It catalyses the reaction adenosine(2503) in 23S rRNA + 2 reduced [2Fe-2S]-[ferredoxin] + 2 S-adenosyl-L-methionine = 2-methyladenosine(2503) in 23S rRNA + 5'-deoxyadenosine + L-methionine + 2 oxidized [2Fe-2S]-[ferredoxin] + S-adenosyl-L-homocysteine. The catalysed reaction is adenosine(37) in tRNA + 2 reduced [2Fe-2S]-[ferredoxin] + 2 S-adenosyl-L-methionine = 2-methyladenosine(37) in tRNA + 5'-deoxyadenosine + L-methionine + 2 oxidized [2Fe-2S]-[ferredoxin] + S-adenosyl-L-homocysteine. Its function is as follows. Specifically methylates position 2 of adenine 2503 in 23S rRNA and position 2 of adenine 37 in tRNAs. m2A2503 modification seems to play a crucial role in the proofreading step occurring at the peptidyl transferase center and thus would serve to optimize ribosomal fidelity. The protein is Dual-specificity RNA methyltransferase RlmN of Bradyrhizobium sp. (strain BTAi1 / ATCC BAA-1182).